Consider the following 59-residue polypeptide: uncharacterized protein (59 aa).

An N-terminal signal peptide occupies residues 1–21 (MYLFYVLLSSLFLSALIYVIG). Over 22-24 (KSH) the chain is Extracellular. The helical transmembrane segment at 25-45 (PNLFMFISLFVNVVTILYLVF) threads the bilayer. Residues 46–59 (KDYGQYIIAKPINT) lie on the Cytoplasmic side of the membrane.

The protein resides in the host membrane. This is an uncharacterized protein from Acidianus convivator (ABV).